The following is a 345-amino-acid chain: Protein-glutamate methylesterase/protein-glutamine glutaminase 2 (345 aa).

The region spanning Met-1–Asp-116 is the Response regulatory domain. Asp-50 is modified (4-aspartylphosphate). Residues Leu-154–Gly-345 form the CheB-type methylesterase domain. Catalysis depends on residues Ser-166, His-192, and Asp-288.

It belongs to the CheB family. In terms of processing, phosphorylated by CheA. Phosphorylation of the N-terminal regulatory domain activates the methylesterase activity.

It localises to the cytoplasm. It carries out the reaction [protein]-L-glutamate 5-O-methyl ester + H2O = L-glutamyl-[protein] + methanol + H(+). It catalyses the reaction L-glutaminyl-[protein] + H2O = L-glutamyl-[protein] + NH4(+). Functionally, involved in chemotaxis. Part of a chemotaxis signal transduction system that modulates chemotaxis in response to various stimuli. Catalyzes the demethylation of specific methylglutamate residues introduced into the chemoreceptors (methyl-accepting chemotaxis proteins or MCP) by CheR. Also mediates the irreversible deamidation of specific glutamine residues to glutamic acid. The chain is Protein-glutamate methylesterase/protein-glutamine glutaminase 2 from Albidiferax ferrireducens (strain ATCC BAA-621 / DSM 15236 / T118) (Rhodoferax ferrireducens).